The following is a 382-amino-acid chain: F-box/kelch-repeat protein At3g16580 (382 aa).

The F-box domain maps to W9 to H55. 2 Kelch repeats span residues K150–T196 and W334–Q381.

This is F-box/kelch-repeat protein At3g16580 from Arabidopsis thaliana (Mouse-ear cress).